Consider the following 216-residue polypeptide: Uracil phosphoribosyltransferase (216 aa).

Residues arginine 85, arginine 110, and 135–143 contribute to the 5-phospho-alpha-D-ribose 1-diphosphate site; that span reads DPMVATGYS. Uracil contacts are provided by residues isoleucine 200 and 205 to 207; that span reads GDA. 5-phospho-alpha-D-ribose 1-diphosphate is bound at residue aspartate 206.

It belongs to the UPRTase family. Requires Mg(2+) as cofactor.

It catalyses the reaction UMP + diphosphate = 5-phospho-alpha-D-ribose 1-diphosphate + uracil. Its pathway is pyrimidine metabolism; UMP biosynthesis via salvage pathway; UMP from uracil: step 1/1. With respect to regulation, allosterically activated by GTP. In terms of biological role, catalyzes the conversion of uracil and 5-phospho-alpha-D-ribose 1-diphosphate (PRPP) to UMP and diphosphate. The polypeptide is Uracil phosphoribosyltransferase (Ralstonia pickettii (strain 12J)).